A 375-amino-acid polypeptide reads, in one-letter code: Trichodiene synthase (375 aa).

This sequence belongs to the trichodiene synthase family.

It carries out the reaction (2E,6E)-farnesyl diphosphate = trichodiene + diphosphate. Its pathway is sesquiterpene biosynthesis; trichothecene biosynthesis. In terms of biological role, TS is a member of the terpene cyclase group of enzymes. It catalyzes the isomerization and cyclization of farnesyl pyro-phosphate to form trichodiene, the first cyclic intermediate in the biosynthetic pathway for trichothecenes. It serves to branch trichothecene biosynthesis from the isoprenoid pathway. The polypeptide is Trichodiene synthase (TRI5) (Fusarium austroamericanum).